The following is a 668-amino-acid chain: Beta-galactosidase (668 aa).

Residues 1 to 24 (MARPAAVRVLWALLLPLLLGSARG) form the signal peptide. A propeptide spanning residues 25–29 (LRNAS) is cleaved from the precursor. Substrate contacts are provided by Y84, E130, and N188. The active-site Proton donor is E189. The cysteines at positions 196 and 231 are disulfide-linked. A glycan (N-linked (GlcNAc...) asparagine) is linked at N248. Catalysis depends on E269, which acts as the Nucleophile. A substrate-binding site is contributed by Y334. 4 N-linked (GlcNAc...) asparagine glycosylation sites follow: N465, N499, N546, and N556. A disulfide bridge links C627 with C635.

This sequence belongs to the glycosyl hydrolase 35 family. In terms of assembly, homodimer. May form higher multimers.

The protein localises to the lysosome. The catalysed reaction is Hydrolysis of terminal non-reducing beta-D-galactose residues in beta-D-galactosides.. Cleaves beta-linked terminal galactosyl residues from gangliosides, glycoproteins, and glycosaminoglycans. The polypeptide is Beta-galactosidase (GLB1) (Canis lupus familiaris (Dog)).